Consider the following 734-residue polypeptide: Methylcrotonoyl-CoA carboxylase subunit alpha, mitochondrial (734 aa).

The N-terminal 25 residues, 1–25 (MSMMTVWALRRNVRRKNHSMLVRYI), are a transit peptide targeting the mitochondrion. One can recognise a Biotin carboxylation domain in the interval 37-484 (CIEKILVANR…ETHFIEHHKS (448 aa)). 3 residues coordinate ATP: Lys152, Glu236, and His271. An ATP-grasp domain is found at 156–354 (KRIMGAAGVP…LVEWQIRVAN (199 aa)). 3 residues coordinate Mn(2+): Glu311, Glu325, and Asn327. Residue Arg329 is part of the active site. Ser645 is modified (phosphoserine). Residues 645–666 (SEDEEGVQHRTSSETSSHPPGT) are disordered. In terms of domain architecture, Biotinyl-binding spans 657–733 (SETSSHPPGT…SDGSALFRIK (77 aa)). N6-biotinyllysine is present on Lys699.

In terms of assembly, probably a heterodimer composed of biotin-containing alpha subunits and beta subunits. Biotin is required as a cofactor. It depends on Mn(2+) as a cofactor. As to expression, in roots, cotyledons, leaves, flowers, ovaries, siliques and embryos.

Its subcellular location is the mitochondrion matrix. It carries out the reaction 3-methylbut-2-enoyl-CoA + hydrogencarbonate + ATP = 3-methyl-(2E)-glutaconyl-CoA + ADP + phosphate + H(+). It functions in the pathway amino-acid degradation; L-leucine degradation; (S)-3-hydroxy-3-methylglutaryl-CoA from 3-isovaleryl-CoA: step 2/3. In terms of biological role, biotin-attachment subunit of the 3-methylcrotonyl-CoA carboxylase, an enzyme that catalyzes the conversion of 3-methylcrotonyl-CoA to 3-methylglutaconyl-CoA, a critical step for leucine and isovaleric acid catabolism. In Arabidopsis thaliana (Mouse-ear cress), this protein is Methylcrotonoyl-CoA carboxylase subunit alpha, mitochondrial (MCCA).